The chain runs to 255 residues: Aspartate/glutamate leucyltransferase (255 aa).

The protein belongs to the R-transferase family. Bpt subfamily.

It localises to the cytoplasm. The catalysed reaction is N-terminal L-glutamyl-[protein] + L-leucyl-tRNA(Leu) = N-terminal L-leucyl-L-glutamyl-[protein] + tRNA(Leu) + H(+). It carries out the reaction N-terminal L-aspartyl-[protein] + L-leucyl-tRNA(Leu) = N-terminal L-leucyl-L-aspartyl-[protein] + tRNA(Leu) + H(+). Its function is as follows. Functions in the N-end rule pathway of protein degradation where it conjugates Leu from its aminoacyl-tRNA to the N-termini of proteins containing an N-terminal aspartate or glutamate. This chain is Aspartate/glutamate leucyltransferase, found in Leptospira borgpetersenii serovar Hardjo-bovis (strain JB197).